The primary structure comprises 153 residues: Aspartate carbamoyltransferase regulatory chain (153 aa).

Positions 109, 114, 138, and 141 each coordinate Zn(2+).

The protein belongs to the PyrI family. In terms of assembly, contains catalytic and regulatory chains. Zn(2+) serves as cofactor.

Its function is as follows. Involved in allosteric regulation of aspartate carbamoyltransferase. In Salmonella schwarzengrund (strain CVM19633), this protein is Aspartate carbamoyltransferase regulatory chain.